The following is a 137-amino-acid chain: Large ribosomal subunit protein uL16 (137 aa).

It belongs to the universal ribosomal protein uL16 family. As to quaternary structure, part of the 50S ribosomal subunit.

Binds 23S rRNA and is also seen to make contacts with the A and possibly P site tRNAs. This is Large ribosomal subunit protein uL16 from Baumannia cicadellinicola subsp. Homalodisca coagulata.